The primary structure comprises 682 residues: Tetratricopeptide repeat protein 39B (682 aa).

2 TPR repeats span residues 393–426 (SLVL…QEEW) and 626–659 (PFTL…YKDY).

It belongs to the TTC39 family.

Regulates high density lipoprotein (HDL) cholesterol metabolism by promoting the ubiquitination and degradation of the oxysterols receptors LXR (NR1H2 and NR1H3). This Homo sapiens (Human) protein is Tetratricopeptide repeat protein 39B.